Here is a 1024-residue protein sequence, read N- to C-terminus: Gamma-tubulin complex component 5 (1024 aa).

Disordered stretches follow at residues 155–203 (IGPY…LDPC) and 521–545 (TENE…SSRQ). Over residues 189–203 (TPLEEQDQNRKLDPC) the composition is skewed to basic and acidic residues. Residues 531 to 543 (ASASSGSDQGPSS) are compositionally biased toward low complexity.

Belongs to the TUBGCP family. As to quaternary structure, component of the gamma-tubulin ring complex (gTuRC) consisting of TUBGCP2, TUBGCP3, TUBGCP4, TUBGCP5 and TUBGCP6 and gamma-tubulin TUBG1 or TUBG2. TUBGCP2, TUBGCP3, TUBGCP4, TUBGCP5 and TUBGCP6 assemble in a 5:5:2:1:1 stoichiometry; each is associated with a gamma-tubulin, thereby arranging 14 gamma-tubulins in a helical manner. Gamma-tubulin at the first position is blocked by TUBGCP3 at the last position, allowing 13 protafilaments to grow into a microtubule. The gTuRC (via TUBGCP3 and TUBGCP6) interacts with ACTB and MZT1; the interactions form a luminal bridge that stabilizes the initial structure during complex assembly. The gTuRC (via TUBGCP2) interacts with MZT2A/MZT2B and CDK5RAP2 (via CM1 motif); the interactions play a role in gTuRC activation. In terms of tissue distribution, widely expressed, with highest levels in heart and skeletal muscle and moderate levels in brain.

The protein resides in the cytoplasm. It localises to the cytoskeleton. It is found in the microtubule organizing center. Its subcellular location is the centrosome. In terms of biological role, component of the gamma-tubulin ring complex (gTuRC) which mediates microtubule nucleation. The gTuRC regulates the minus-end nucleation of alpha-beta tubulin heterodimers that grow into microtubule protafilaments, a critical step in centrosome duplication and spindle formation. The sequence is that of Gamma-tubulin complex component 5 (TUBGCP5) from Homo sapiens (Human).